Consider the following 130-residue polypeptide: Small ribosomal subunit protein uS9 (130 aa).

This sequence belongs to the universal ribosomal protein uS9 family.

The protein is Small ribosomal subunit protein uS9 of Shewanella pealeana (strain ATCC 700345 / ANG-SQ1).